The following is a 128-amino-acid chain: Small ribosomal subunit protein uS12 (128 aa).

Asp-89 bears the 3-methylthioaspartic acid mark.

It belongs to the universal ribosomal protein uS12 family. Part of the 30S ribosomal subunit. Contacts proteins S8 and S17. May interact with IF1 in the 30S initiation complex.

Functionally, with S4 and S5 plays an important role in translational accuracy. Interacts with and stabilizes bases of the 16S rRNA that are involved in tRNA selection in the A site and with the mRNA backbone. Located at the interface of the 30S and 50S subunits, it traverses the body of the 30S subunit contacting proteins on the other side and probably holding the rRNA structure together. The combined cluster of proteins S8, S12 and S17 appears to hold together the shoulder and platform of the 30S subunit. In Campylobacter jejuni subsp. doylei (strain ATCC BAA-1458 / RM4099 / 269.97), this protein is Small ribosomal subunit protein uS12.